A 372-amino-acid chain; its full sequence is ATP phosphoribosyltransferase regulatory subunit (372 aa).

It belongs to the class-II aminoacyl-tRNA synthetase family. HisZ subfamily. In terms of assembly, heteromultimer composed of HisG and HisZ subunits.

The protein localises to the cytoplasm. Its pathway is amino-acid biosynthesis; L-histidine biosynthesis; L-histidine from 5-phospho-alpha-D-ribose 1-diphosphate: step 1/9. In terms of biological role, required for the first step of histidine biosynthesis. May allow the feedback regulation of ATP phosphoribosyltransferase activity by histidine. The polypeptide is ATP phosphoribosyltransferase regulatory subunit (Allorhizobium ampelinum (strain ATCC BAA-846 / DSM 112012 / S4) (Agrobacterium vitis (strain S4))).